Here is an 840-residue protein sequence, read N- to C-terminus: DNA gyrase subunit A (840 aa).

Positions 51 to 516 (LPDVRDGFKP…VSSHIDDEDL (466 aa)) constitute a Topo IIA-type catalytic domain. The O-(5'-phospho-DNA)-tyrosine intermediate role is filled by tyrosine 139. Residues 543–549 (QRRGGVG) carry the GyrA-box motif.

Belongs to the type II topoisomerase GyrA/ParC subunit family. In terms of assembly, heterotetramer, composed of two GyrA and two GyrB chains. In the heterotetramer, GyrA contains the active site tyrosine that forms a transient covalent intermediate with DNA, while GyrB binds cofactors and catalyzes ATP hydrolysis.

The protein resides in the cytoplasm. The enzyme catalyses ATP-dependent breakage, passage and rejoining of double-stranded DNA.. A type II topoisomerase that negatively supercoils closed circular double-stranded (ds) DNA in an ATP-dependent manner to modulate DNA topology and maintain chromosomes in an underwound state. Negative supercoiling favors strand separation, and DNA replication, transcription, recombination and repair, all of which involve strand separation. Also able to catalyze the interconversion of other topological isomers of dsDNA rings, including catenanes and knotted rings. Type II topoisomerases break and join 2 DNA strands simultaneously in an ATP-dependent manner. In Ureaplasma parvum serovar 3 (strain ATCC 700970), this protein is DNA gyrase subunit A.